The sequence spans 361 residues: T-box-containing protein TBX6L (361 aa).

The T-box DNA-binding region spans L36 to E209. Disordered stretches follow at residues F203–E259 and H280–S323. Basic and acidic residues-rich tracts occupy residues G206–A220 and K234–E259. The span at H280–A290 shows a compositional bias: low complexity.

The protein localises to the nucleus. Functionally, may be involved in regulating somitogenesis. The sequence is that of T-box-containing protein TBX6L (TBX6L) from Gallus gallus (Chicken).